The primary structure comprises 1408 residues: DNA-directed RNA polymerase subunit beta' (1408 aa).

Residues cysteine 70, cysteine 72, cysteine 85, and cysteine 88 each coordinate Zn(2+). Mg(2+)-binding residues include aspartate 458, aspartate 460, and aspartate 462. The Zn(2+) site is built by cysteine 813, cysteine 887, cysteine 894, and cysteine 897. The segment at 1387 to 1408 (AELEAATATAPADAGGDSPATE) is disordered. Residues 1389 to 1408 (LEAATATAPADAGGDSPATE) are compositionally biased toward low complexity.

It belongs to the RNA polymerase beta' chain family. As to quaternary structure, the RNAP catalytic core consists of 2 alpha, 1 beta, 1 beta' and 1 omega subunit. When a sigma factor is associated with the core the holoenzyme is formed, which can initiate transcription. The cofactor is Mg(2+). Requires Zn(2+) as cofactor.

The catalysed reaction is RNA(n) + a ribonucleoside 5'-triphosphate = RNA(n+1) + diphosphate. Its function is as follows. DNA-dependent RNA polymerase catalyzes the transcription of DNA into RNA using the four ribonucleoside triphosphates as substrates. In Polaromonas sp. (strain JS666 / ATCC BAA-500), this protein is DNA-directed RNA polymerase subunit beta'.